Consider the following 189-residue polypeptide: GMP synthase [glutamine-hydrolyzing] subunit A (189 aa).

Residues 1 to 189 (MIVILNNGGQ…CKKCGFEFEE (189 aa)) form the Glutamine amidotransferase type-1 domain. C76 functions as the Nucleophile in the catalytic mechanism. Active-site residues include H163 and E165.

In terms of assembly, heterodimer composed of a glutamine amidotransferase subunit (A) and a GMP-binding subunit (B).

The enzyme catalyses XMP + L-glutamine + ATP + H2O = GMP + L-glutamate + AMP + diphosphate + 2 H(+). It participates in purine metabolism; GMP biosynthesis; GMP from XMP (L-Gln route): step 1/1. Its function is as follows. Catalyzes the synthesis of GMP from XMP. This chain is GMP synthase [glutamine-hydrolyzing] subunit A, found in Methanococcus maripaludis (strain C6 / ATCC BAA-1332).